The sequence spans 472 residues: Protein nucleotidyltransferase YdiU (472 aa).

ATP is bound by residues Gly-86, Gly-88, Arg-89, Lys-109, Asp-121, Gly-122, Arg-172, and Arg-179. The active-site Proton acceptor is Asp-244. The Mg(2+) site is built by Asn-245 and Asp-254. Residue Asp-254 coordinates ATP.

Belongs to the SELO family. Requires Mg(2+) as cofactor. The cofactor is Mn(2+).

It carries out the reaction L-seryl-[protein] + ATP = 3-O-(5'-adenylyl)-L-seryl-[protein] + diphosphate. The enzyme catalyses L-threonyl-[protein] + ATP = 3-O-(5'-adenylyl)-L-threonyl-[protein] + diphosphate. The catalysed reaction is L-tyrosyl-[protein] + ATP = O-(5'-adenylyl)-L-tyrosyl-[protein] + diphosphate. It catalyses the reaction L-histidyl-[protein] + UTP = N(tele)-(5'-uridylyl)-L-histidyl-[protein] + diphosphate. It carries out the reaction L-seryl-[protein] + UTP = O-(5'-uridylyl)-L-seryl-[protein] + diphosphate. The enzyme catalyses L-tyrosyl-[protein] + UTP = O-(5'-uridylyl)-L-tyrosyl-[protein] + diphosphate. In terms of biological role, nucleotidyltransferase involved in the post-translational modification of proteins. It can catalyze the addition of adenosine monophosphate (AMP) or uridine monophosphate (UMP) to a protein, resulting in modifications known as AMPylation and UMPylation. The chain is Protein nucleotidyltransferase YdiU from Ruegeria pomeroyi (strain ATCC 700808 / DSM 15171 / DSS-3) (Silicibacter pomeroyi).